The primary structure comprises 321 residues: Putrescine export system permease protein SapB (321 aa).

Residues 1 to 8 are Cytoplasmic-facing; that stretch reads MIIFTLRR. A helical transmembrane segment spans residues 9-29; the sequence is ILLLIVTLFLLTFVGFSLSYF. The Periplasmic portion of the chain corresponds to 30-80; it reads TPHAPLQGASLWNAWVFWFNGLIHWDFGVSSINGQPIAEQLKEVFPATMEL. The ABC transmembrane type-1 domain occupies 74 to 302; the sequence is FPATMELCIL…SLVIIVNVIS (229 aa). Residues 81-101 form a helical membrane-spanning segment; the sequence is CILAFGFALIVGIPVGMIAGI. Over 102–112 the chain is Cytoplasmic; sequence TRHKWQDNLIN. A helical membrane pass occupies residues 113-133; the sequence is AIALLGFSIPVFWLALLLTLF. Residues 134–174 lie on the Periplasmic side of the membrane; it reads CSLTLGWLPVSGRFDLLYEVKPITGFALIDAWLSDSPWRDE. Residues 175–195 form a helical membrane-spanning segment; the sequence is MIMSAIRHMILPVITLSVAPT. The Cytoplasmic segment spans residues 196-248; the sequence is TEVIRLMRISTIEVYDQNYVKAAATRGLSRFTILRRHVLHNALPPVIPRLGLQ. The chain crosses the membrane as a helical span at residues 249–269; it reads FSTMLTLAMITEMVFSWPGLG. The Periplasmic segment spans residues 270 to 280; the sequence is RWLINAIRQQD. Residues 281 to 301 form a helical membrane-spanning segment; that stretch reads YAAISAGVMVCGSLVIIVNVI. The Cytoplasmic portion of the chain corresponds to 302-321; that stretch reads SDILGAMANPLKHKEWYALR.

It belongs to the binding-protein-dependent transport system permease family. OppBC subfamily.

It localises to the cell inner membrane. Functionally, part of a putrescine export transport system, does not play a role in resistance to antimicrobial peptides. This chain is Putrescine export system permease protein SapB (sapB), found in Escherichia coli (strain K12).